We begin with the raw amino-acid sequence, 205 residues long: GTP cyclohydrolase 1 (205 aa).

Zn(2+) contacts are provided by Cys-94, His-97, and Cys-165.

Belongs to the GTP cyclohydrolase I family. Toroid-shaped homodecamer, composed of two pentamers of five dimers.

It carries out the reaction GTP + H2O = 7,8-dihydroneopterin 3'-triphosphate + formate + H(+). It participates in cofactor biosynthesis; 7,8-dihydroneopterin triphosphate biosynthesis; 7,8-dihydroneopterin triphosphate from GTP: step 1/1. This chain is GTP cyclohydrolase 1, found in Sinorhizobium medicae (strain WSM419) (Ensifer medicae).